The chain runs to 714 residues: BBSome complex member bbs-2 (714 aa).

2 coiled-coil regions span residues Ile332 to Asp361 and Met597 to Ala627.

As to quaternary structure, part of BBSome complex, that contains at least bbs-1, bbs-2, bbs-4, bbs-5, osm-12, bbs-8/ttc-8 and bbs-9. In terms of tissue distribution, expressed in ciliated cells including amphid and both inner and outer labial neurons of the head and in both phasmid neurons PHA and PHB in the tail at larval stages L1 and L2.

The protein resides in the cell projection. Its subcellular location is the cilium. The protein localises to the cytoplasm. It localises to the cytoskeleton. It is found in the cilium basal body. The protein resides in the cilium axoneme. In terms of biological role, component of the BBSome complex. The BBSome complex is thought to function as a coat complex required for sorting of specific membrane proteins to the primary cilia. The BBSome complex is required for ciliogenesis but is dispensable for centriolar satellite function. Required for proper BBSome complex assembly and its ciliary localization. Required for cilia biogenesis and both the assembly and movement of intraflagellar transport proteins along the ciliary axoneme. In Caenorhabditis elegans, this protein is BBSome complex member bbs-2.